A 187-amino-acid polypeptide reads, in one-letter code: Protein TIFY 3B (187 aa).

Residues 1 to 10 (MTKVKDEPRA) are compositionally biased toward basic and acidic residues. Residues 1–50 (MTKVKDEPRASVEGGCGVADGDGGAAEIGGTGSVEKSINEVRSTEIQTAE) form a disordered region. The span at 14–32 (GGCGVADGDGGAAEIGGTG) shows a compositional bias: gly residues. Positions 51 to 86 (PTVPPNQLTIFFGGSVTVFDGLPSEKVQEILRIAAK) constitute a Tify domain. Residues 139 to 163 (PIARRHSLQRFLEKRRDRLVNKNPY) carry the Jas motif. The Nuclear localization signal motif lies at 141–148 (ARRHSLQR). Positions 152-187 (KRRDRLVNKNPYPTSDFKKTDVPTGNVSIKEEFPTA) are disordered.

This sequence belongs to the TIFY/JAZ family. As to quaternary structure, interacts with MYC2, AFPH2/NINJA, TIFY10A/JAZ1, TIFY10B/JAZ2, TIFY11A/JAZ5, TIFY11B/JAZ6, TIFY5A/JAZ8 and TIFY9/JAZ10. In terms of assembly, (Microbial infection) Interacts with the pathogenic Pseudomonas syringae HopZ1a protein. (Microbial infection) Acetylated by Pseudomonas syringae HopZ1a. In terms of processing, ubiquitinated. Targeted for degradation by the SCF(COI1) E3 ubiquitin ligase-proteasome pathway during jasmonate signaling.

It localises to the nucleus. Its function is as follows. Repressor of jasmonate responses. This chain is Protein TIFY 3B, found in Arabidopsis thaliana (Mouse-ear cress).